Consider the following 92-residue polypeptide: Cell division protein FtsB (92 aa).

Residues 1-3 (MRL) are Cytoplasmic-facing. The chain crosses the membrane as a helical span at residues 4–21 (LILILLSVLVLFQHDFWF). The Periplasmic segment spans residues 22–92 (GSNGFLDYRQ…VFYHIVKESK (71 aa)). Residues 28 to 63 (DYRQNAEKIKENQAENEKLSQRNQRINAEIQGLTKG) are a coiled coil.

It belongs to the FtsB family. In terms of assembly, part of a complex composed of FtsB, FtsL and FtsQ.

The protein resides in the cell inner membrane. In terms of biological role, essential cell division protein. May link together the upstream cell division proteins, which are predominantly cytoplasmic, with the downstream cell division proteins, which are predominantly periplasmic. The sequence is that of Cell division protein FtsB from Haemophilus influenzae (strain PittEE).